The chain runs to 354 residues: MPRRSLHAAAVLLLVILKEQPSSPAPVNGSKWTYFGPDGENSWSKKYPSCGGLLQSPIDLHSDILQYDASLTPLEFQGYNLSANKQFLLTNNGHSVKLNLPSDMHIQGLQSRYSATQLHLHWGNPNDPHGSEHTVSGQHFAAELHIVHYNSDLYPDASTASNKSEGLAVLAVLIEMGSFNPSYDKIFSHLQHVKYKGQEAFVPGFNIEELLPERTAEYYRYRGSLTTPPCNPTVLWTVFRNPVQISQEQLLALETALYCTHMDDPSPREMINNFRQVQKFDERLVYTSFSQVQVCTAAGLSLGIILSLALAGILGICIVVVVSIWLFRRKSIKKGDNKGVIYKPATKMETEAHA.

The signal sequence occupies residues 1–24 (MPRRSLHAAAVLLLVILKEQPSSP). At 25 to 301 (APVNGSKWTY…VQVCTAAGLS (277 aa)) the chain is on the extracellular side. N-linked (GlcNAc...) asparagine glycosylation is found at Asn-28 and Asn-80. An Alpha-carbonic anhydrase domain is found at 30–289 (SKWTYFGPDG…FDERLVYTSF (260 aa)). Residues Cys-50 and Cys-230 are joined by a disulfide bond. The Proton donor/acceptor role is filled by His-94. Residues His-119, His-121, and His-145 each contribute to the Zn(2+) site. Asn-162 carries an N-linked (GlcNAc...) asparagine glycan. Position 226–227 (226–227 (TT)) interacts with substrate. A helical transmembrane segment spans residues 302 to 322 (LGIILSLALAGILGICIVVVV). The Cytoplasmic portion of the chain corresponds to 323 to 354 (SIWLFRRKSIKKGDNKGVIYKPATKMETEAHA).

It belongs to the alpha-carbonic anhydrase family. Homodimer. Requires Zn(2+) as cofactor. Highly expressed in colon, kidney, prostate, intestine and activated lymphocytes. Expressed at much higher levels in the renal cell cancers than in surrounding normal kidney tissue. Moderately expressed in pancreas, ovary and testis. Expressed in sweat glands and bronchiolar epithelium.

The protein resides in the membrane. The protein localises to the cell membrane. The enzyme catalyses hydrogencarbonate + H(+) = CO2 + H2O. With respect to regulation, inhibited by coumarins, saccharin, sulfonamide derivatives such as acetazolamide (AZA), benzenesulfonamide and derivatives (4-carboxyethylbenzene-sulfonamide, 4-carboxyethylbenzene-sulfonamide ethyl ester, 4-(acetyl-2-aminoethyl)benzene-sulfonamide, 4-aminoethylbenzene-sulfonamide) and Foscarnet (phosphonoformate trisodium salt). Its function is as follows. Reversible hydration of carbon dioxide. This is Carbonic anhydrase 12 from Homo sapiens (Human).